The chain runs to 290 residues: CMRF35-like molecule 1 (290 aa).

A signal peptide spans 1 to 19 (MPLLTLYLLLFWLSGYSIV). The 107-residue stretch at 20–126 (TQITGPTTVN…LGVTVQVTID (107 aa)) folds into the Ig-like V-type domain. The Extracellular segment spans residues 20–156 (TQITGPTTVN…DNRHKLLKLS (137 aa)). 2 disulfide bridges follow: cysteine 40–cysteine 108 and cysteine 54–cysteine 62. An N-linked (GlcNAc...) asparagine glycan is attached at asparagine 88. The helical transmembrane segment at 157 to 177 (VLLPLIFTILLLLLVAASLLA) threads the bilayer. Over 178 to 290 (WRMMKYQQKA…PTEYSTISRP (113 aa)) the chain is Cytoplasmic. Residues 267–290 (GHLSSHLPGRGPEEPTEYSTISRP) form a disordered region.

This sequence belongs to the CD300 family. In terms of assembly, interacts with PTPN6/SHP-1 in a tyrosine phosphorylation dependent manner. Interacts with IL4R. Phosphorylated on tyrosine. As to expression, highly expressed in spleen, peripheral blood leukocyte and monocyte, and lung. Weakly expressed in thymus, heart, brain, placenta, liver, skeletal muscle, kidney, pancreas, prostate, testis, ovary, small intestine or colon. Expressed selectively in monocytes and monocyte-related cells.

It is found in the cell membrane. Its function is as follows. Acts as an inhibitory receptor for myeloid cells and mast cells. Positively regulates the phagocytosis of apoptotic cells (efferocytosis) via phosphatidylserine (PS) recognition; recognizes and binds PS as a ligand which is expressed on the surface of apoptotic cells. Plays an important role in the maintenance of immune homeostasis, by promoting macrophage-mediated efferocytosis and by inhibiting dendritic cell-mediated efferocytosis. Negatively regulates Fc epsilon receptor-dependent mast cell activation and allergic responses via binding to ceramide and sphingomyelin which act as ligands. May act as a coreceptor for interleukin 4 (IL-4). Associates with and regulates IL-4 receptor alpha-mediated responses by augmenting IL-4- and IL-13-induced signaling. Negatively regulates the Toll-like receptor (TLR) signaling mediated by MYD88 and TRIF through activation of PTPN6/SHP-1 and PTPN11/SHP-2. Inhibits osteoclast formation. Induces macrophage cell death upon engagement. The protein is CMRF35-like molecule 1 (CD300LF) of Homo sapiens (Human).